Here is a 63-residue protein sequence, read N- to C-terminus: Large ribosomal subunit protein uL30 (63 aa).

The protein belongs to the universal ribosomal protein uL30 family. Part of the 50S ribosomal subunit.

In Xanthomonas campestris pv. campestris (strain 8004), this protein is Large ribosomal subunit protein uL30.